The chain runs to 136 residues: Large ribosomal subunit protein uL16 (136 aa).

The protein belongs to the universal ribosomal protein uL16 family. In terms of assembly, part of the 50S ribosomal subunit.

Its function is as follows. Binds 23S rRNA and is also seen to make contacts with the A and possibly P site tRNAs. The chain is Large ribosomal subunit protein uL16 from Actinobacillus succinogenes (strain ATCC 55618 / DSM 22257 / CCUG 43843 / 130Z).